We begin with the raw amino-acid sequence, 382 residues long: tRNA (guanine(37)-N(1))-methyltransferase (382 aa).

S-adenosyl-L-methionine contacts are provided by residues His-205, 243-244 (DL), 269-270 (DA), and Asn-291.

It belongs to the class I-like SAM-binding methyltransferase superfamily. TRM5/TYW2 family. In terms of assembly, monomer.

The protein resides in the mitochondrion matrix. The protein localises to the nucleus. It localises to the cytoplasm. It carries out the reaction guanosine(37) in tRNA + S-adenosyl-L-methionine = N(1)-methylguanosine(37) in tRNA + S-adenosyl-L-homocysteine + H(+). Specifically methylates the N1 position of guanosine-37 in various cytoplasmic and mitochondrial tRNAs. Methylation is not dependent on the nature of the nucleoside 5' of the target nucleoside. This is the first step in the biosynthesis of wybutosine (yW), a modified base adjacent to the anticodon of tRNAs and required for accurate decoding. In Entamoeba histolytica (strain ATCC 30459 / HM-1:IMSS / ABRM), this protein is tRNA (guanine(37)-N(1))-methyltransferase.